The chain runs to 365 residues: MASMWAPEHSAEAHSNLSSTTDDCGSVSVAFPITMMVTGFVGNALAMLLVSRSYRRRESKRKKSFLLCIGWLALTDLVGQLLTSPVVILVYLSQRRWEQLDPSGRLCTFFGLTMTVFGLSSLLVASAMAVERALAIRAPHWYASHMKTRATPVLLGVWLSVLAFALLPVLGVGRYSVQWPGTWCFISTGPAGNETDPAREPGSVAFASAFACLGLLALVVTFACNLATIKALVSRCRAKAAVSQSSAQWGRITTETAIQLMGIMCVLSVCWSPLLIMMLKMIFNQMSVEQCKTQMGKEKECNSFLIAVRLASLNQILDPWVYLLLRKILLRKFCQIRDHTNYASSSTSLPCPGSSALMWSDQLER.

The tract at residues 1-22 (MASMWAPEHSAEAHSNLSSTTD) is disordered. Topologically, residues 1–30 (MASMWAPEHSAEAHSNLSSTTDDCGSVSVA) are extracellular. The segment covering 13 to 22 (AHSNLSSTTD) has biased composition (polar residues). An N-linked (GlcNAc...) asparagine glycan is attached at Asn16. Residues 31-55 (FPITMMVTGFVGNALAMLLVSRSYR) traverse the membrane as a helical segment. Over 56 to 68 (RRESKRKKSFLLC) the chain is Cytoplasmic. A helical membrane pass occupies residues 69 to 89 (IGWLALTDLVGQLLTSPVVIL). The Extracellular segment spans residues 90–108 (VYLSQRRWEQLDPSGRLCT). A disulfide bond links Cys107 and Cys184. The chain crosses the membrane as a helical span at residues 109 to 130 (FFGLTMTVFGLSSLLVASAMAV). Over 131–151 (ERALAIRAPHWYASHMKTRAT) the chain is Cytoplasmic. A helical transmembrane segment spans residues 152-173 (PVLLGVWLSVLAFALLPVLGVG). The Extracellular segment spans residues 174–203 (RYSVQWPGTWCFISTGPAGNETDPAREPGS). A glycan (N-linked (GlcNAc...) asparagine) is linked at Asn193. The chain crosses the membrane as a helical span at residues 204–229 (VAFASAFACLGLLALVVTFACNLATI). The Cytoplasmic segment spans residues 230–259 (KALVSRCRAKAAVSQSSAQWGRITTETAIQ). Residues 260-283 (LMGIMCVLSVCWSPLLIMMLKMIF) traverse the membrane as a helical segment. Over 284–303 (NQMSVEQCKTQMGKEKECNS) the chain is Extracellular. The chain crosses the membrane as a helical span at residues 304–325 (FLIAVRLASLNQILDPWVYLLL). The Cytoplasmic portion of the chain corresponds to 326–365 (RKILLRKFCQIRDHTNYASSSTSLPCPGSSALMWSDQLER).

It belongs to the G-protein coupled receptor 1 family. As to quaternary structure, interacts (via C-terminus) with MKLN1. Ligand binding is affected by cAMP-dependent phosphorylation in brain membranes. As to expression, detected in platelets. Kidney, uterus, and mastocytoma cells, and in a lesser amount in brain, thymus, lung, heart, stomach and spleen.

The protein resides in the cell membrane. Its function is as follows. Receptor for prostaglandin E2 (PGE2). Required for normal development of fever in response to pyrinogens, including IL1B, prostaglandin E2 and bacterial lipopolysaccharide (LPS). Required for normal potentiation of platelet aggregation by prostaglandin E2, and thus plays a role in the regulation of blood coagulation. Required for increased HCO3(-) secretion in the duodenum in response to mucosal acidification, and thereby contributes to the protection of the mucosa against acid-induced ulceration. Not required for normal kidney function, normal urine volume and osmolality. In terms of biological role, receptor for prostaglandin E2 (PGE2); ligand binding activates a signaling cascade via G(i) proteins that leads to inhibition of adenylate cyclase. Shows high agonist-independent constitutive inhibition of adenylate cyclase. Functionally, receptor for prostaglandin E2 (PGE2); ligand binding activates a signaling cascade via G(i) proteins that leads to inhibition of adenylate cyclase. Requires much higher ligand concentrations than isoform Alpha for activation. Does not display agonist-independent constitutive inhibition of adenylate cyclase. Receptor for prostaglandin E2 (PGE2); ligand binding can activate several distinct signaling cascades, resulting in activation or inhibition of adenylate cyclase. In Mus musculus (Mouse), this protein is Prostaglandin E2 receptor EP3 subtype (Ptger3).